Consider the following 581-residue polypeptide: Putative phospholipase B-like 3 (581 aa).

The N-terminal stretch at 1 to 16 (MKLLFFLFGLIFAVEQ) is a signal peptide. Residues Asn50, Asn82, Asn132, Asn169, Asn215, Asn309, Asn543, Asn546, and Asn560 are each glycosylated (N-linked (GlcNAc...) asparagine).

The protein belongs to the phospholipase B-like family.

Its subcellular location is the secreted. Putative phospholipase. The polypeptide is Putative phospholipase B-like 3 (Caenorhabditis elegans).